Here is a 104-residue protein sequence, read N- to C-terminus: L-rhamnose mutarotase (104 aa).

Substrate is bound at residue Tyr-18. Catalysis depends on His-22, which acts as the Proton donor. Substrate-binding positions include Tyr-41 and 76 to 77 (WW).

Belongs to the rhamnose mutarotase family. As to quaternary structure, homodimer.

It is found in the cytoplasm. It carries out the reaction alpha-L-rhamnose = beta-L-rhamnose. It participates in carbohydrate metabolism; L-rhamnose metabolism. In terms of biological role, involved in the anomeric conversion of L-rhamnose. The sequence is that of L-rhamnose mutarotase from Yersinia pseudotuberculosis serotype O:1b (strain IP 31758).